The primary structure comprises 339 residues: Lipopolysaccharide 1,2-glucosyltransferase (339 aa).

Residues 35–40 (GIDENY) and 132–133 (DA) contribute to the UDP site. Residues aspartate 132 and aspartate 134 each coordinate Mg(2+). 2 consecutive short sequence motifs (DXD) follow at residues 132 to 134 (DAD) and 219 to 221 (DQD). Histidine 268 lines the Mg(2+) pocket. 268–274 (HYTGITK) lines the UDP pocket.

The protein belongs to the glycosyltransferase 8 family. It depends on Mg(2+) as a cofactor.

The protein localises to the cell inner membrane. It carries out the reaction UDP-glucose + [lipopolysaccharide] = UDP + D-glucosyl-[lipopolysaccharide].. The protein operates within bacterial outer membrane biogenesis; LPS core biosynthesis. Its function is as follows. Glucosyltransferase involved in the biosynthesis of the core oligosaccharide region of lipopolysaccharide (LPS). Catalyzes the addition of a glucose (glucose II) to the outer-core galactose I. Has a marked preference for its specific donor substrate, but it appears to have a relaxed specificity for alternate LPS acceptor residues, providing the overall size of the acceptor is conserved. This Escherichia coli protein is Lipopolysaccharide 1,2-glucosyltransferase.